Here is a 347-residue protein sequence, read N- to C-terminus: Phenylalanine--tRNA ligase alpha subunit (347 aa).

Glu-261 contacts Mg(2+).

Belongs to the class-II aminoacyl-tRNA synthetase family. Phe-tRNA synthetase alpha subunit type 1 subfamily. In terms of assembly, tetramer of two alpha and two beta subunits. Requires Mg(2+) as cofactor.

It localises to the cytoplasm. The enzyme catalyses tRNA(Phe) + L-phenylalanine + ATP = L-phenylalanyl-tRNA(Phe) + AMP + diphosphate + H(+). In Streptococcus uberis (strain ATCC BAA-854 / 0140J), this protein is Phenylalanine--tRNA ligase alpha subunit.